A 448-amino-acid polypeptide reads, in one-letter code: Oxysterol-binding protein homolog 6 (448 aa).

Positions 1-42 (MGSKKLTVGSDSHRLSKSSFSSNKSSHSATKDQPIDTDDIDE) are disordered. Serine 16 is subject to Phosphoserine. Residues 17–28 (KSSFSSNKSSHS) show a composition bias toward low complexity. The segment at 54–391 (IISQLRPGCD…PGEDLDYCIY (338 aa)) is OSBP-related domain (ORD). A 1,2-diacyl-sn-glycero-3-phospho-(1D-myo-inositol 4-phosphate) contacts are provided by residues 64 to 69 (LTRITL), 126 to 129 (KPLN), and 157 to 158 (HH). A 1,2-diacyl-sn-glycero-3-phospho-L-serine-binding positions include 64-69 (LTRITL) and asparagine 129. Residue serine 183 participates in a 1,2-diacyl-sn-glycero-3-phospho-L-serine binding. A 1,2-diacyl-sn-glycero-3-phospho-(1D-myo-inositol 4-phosphate) contacts are provided by lysine 351, glutamate 355, and arginine 359.

This sequence belongs to the OSBP family. As to quaternary structure, interacts with the AAA ATPase VPS4; regulates OSH6 membrane association. VPS4 is required for membrane dissociation of OSH6.

The protein localises to the cytoplasm. The protein resides in the cell membrane. It localises to the endoplasmic reticulum membrane. The enzyme catalyses a 1,2-diacyl-sn-glycero-3-phospho-L-serine(in) = a 1,2-diacyl-sn-glycero-3-phospho-L-serine(out). Functionally, lipid transport protein (LTP) involved in non-vesicular transfer of lipids between membranes. Functions in phosphoinositide-coupled directional transport of various lipids by carrying the lipid molecule in a hydrophobic pocket and transferring it between membranes through the cytosol. Involved in maintenance of intracellular sterol distribution and homeostasis. Catalyzes the lipid countertransport between the endoplasmic reticulum (ER) and the plasma membrane (PM). Specifically exchanges phosphatidylserine (PS) with phosphatidylinositol 4-phosphate (PI4P), delivering phosphatidylserine to the PM in exchange for PI4P, which is delivered to the ER-localized PI4P phosphatase SAC1 for degradation. Thus, by maintaining a PI4P gradient at the ER/PM interface, SAC1 drives PS transport. Binds phosphatidylserine and PI4P in a mutually exclusive manner. Also binds phosphatidic acid (PA). This Saccharomyces cerevisiae (strain ATCC 204508 / S288c) (Baker's yeast) protein is Oxysterol-binding protein homolog 6.